The sequence spans 201 residues: Small ribosomal subunit protein uS5 (201 aa).

The disordered stretch occupies residues 1-28 (MAHQNEQRGGGDRGRGRGRGRDRDQERD). One can recognise an S5 DRBM domain in the interval 31–94 (LVDKLVHINR…DEAKKNMIRV (64 aa)). The segment at 173-201 (SVAAKRGLKVGDLVNRRDDGASSPEAIEA) is disordered.

It belongs to the universal ribosomal protein uS5 family. As to quaternary structure, part of the 30S ribosomal subunit. Contacts proteins S4 and S8.

Its function is as follows. With S4 and S12 plays an important role in translational accuracy. Located at the back of the 30S subunit body where it stabilizes the conformation of the head with respect to the body. In Maricaulis maris (strain MCS10) (Caulobacter maris), this protein is Small ribosomal subunit protein uS5.